The primary structure comprises 352 residues: Holliday junction branch migration complex subunit RuvB (352 aa).

Residues 5–191 (TDDFSEQRVI…FGIVARLEFY (187 aa)) are large ATPase domain (RuvB-L). ATP contacts are provided by residues leucine 30, arginine 31, glycine 72, lysine 75, threonine 76, threonine 77, 138–140 (EDY), arginine 181, tyrosine 191, and arginine 228. Position 76 (threonine 76) interacts with Mg(2+). Residues 192–262 (TPLELTRIVT…MADAALVMLD (71 aa)) are small ATPAse domain (RuvB-S). Residues 265-352 (PVGFDVMDRK…GPNGELWGGQ (88 aa)) form a head domain (RuvB-H) region. The DNA site is built by arginine 301, arginine 320, and arginine 325.

The protein belongs to the RuvB family. Homohexamer. Forms an RuvA(8)-RuvB(12)-Holliday junction (HJ) complex. HJ DNA is sandwiched between 2 RuvA tetramers; dsDNA enters through RuvA and exits via RuvB. An RuvB hexamer assembles on each DNA strand where it exits the tetramer. Each RuvB hexamer is contacted by two RuvA subunits (via domain III) on 2 adjacent RuvB subunits; this complex drives branch migration. In the full resolvosome a probable DNA-RuvA(4)-RuvB(12)-RuvC(2) complex forms which resolves the HJ.

The protein resides in the cytoplasm. The catalysed reaction is ATP + H2O = ADP + phosphate + H(+). In terms of biological role, the RuvA-RuvB-RuvC complex processes Holliday junction (HJ) DNA during genetic recombination and DNA repair, while the RuvA-RuvB complex plays an important role in the rescue of blocked DNA replication forks via replication fork reversal (RFR). RuvA specifically binds to HJ cruciform DNA, conferring on it an open structure. The RuvB hexamer acts as an ATP-dependent pump, pulling dsDNA into and through the RuvAB complex. RuvB forms 2 homohexamers on either side of HJ DNA bound by 1 or 2 RuvA tetramers; 4 subunits per hexamer contact DNA at a time. Coordinated motions by a converter formed by DNA-disengaged RuvB subunits stimulates ATP hydrolysis and nucleotide exchange. Immobilization of the converter enables RuvB to convert the ATP-contained energy into a lever motion, pulling 2 nucleotides of DNA out of the RuvA tetramer per ATP hydrolyzed, thus driving DNA branch migration. The RuvB motors rotate together with the DNA substrate, which together with the progressing nucleotide cycle form the mechanistic basis for DNA recombination by continuous HJ branch migration. Branch migration allows RuvC to scan DNA until it finds its consensus sequence, where it cleaves and resolves cruciform DNA. The polypeptide is Holliday junction branch migration complex subunit RuvB (Herminiimonas arsenicoxydans).